Consider the following 210-residue polypeptide: Uridine kinase P10 (210 aa).

Residue 10-18 participates in ATP binding; that stretch reads GISGSGKST. Aspartate 41 is a catalytic residue.

Belongs to the uridine kinase family. In terms of assembly, interacts with host eIF-2B; this interaction disrupts the interaction between eIF2 and eIF-2B, which leads to the inhibition of stress granules formation.

The protein resides in the host cytoplasm. It is found in the host perinuclear region. It carries out the reaction uridine + ATP = UMP + ADP + H(+). Its function is as follows. Inhibits the integrated stress response (ISR) in the infected cell by preventing the sequestration of eIF2B by phosphorylated EIF2S1/eIF-2alpha. Stress granule formation in response to EIF2S1/eIF-2alpha phosphorylation is thus inhibited, which allows protein synthesis and viral replication. Phosphorylates uridine to uridine monophosphate. The polypeptide is Uridine kinase P10 (ORF10) (Beluga whale coronavirus (strain SW1) (BwCoV)).